The chain runs to 59 residues: MRQLKGKPKKETSKDKKERKQAMQEARQQITTVVLPTLAVVVALIVVFVYVATRPNTIE.

Positions 1 to 23 (MRQLKGKPKKETSKDKKERKQAM) are disordered. Residues 9–22 (KKETSKDKKERKQA) show a composition bias toward basic and acidic residues. Positions 9-31 (KKETSKDKKERKQAMQEARQQIT) form a coiled coil. A helical transmembrane segment spans residues 32–52 (TVVLPTLAVVVALIVVFVYVA).

The protein belongs to the SMCO4 family.

It is found in the membrane. In Xenopus laevis (African clawed frog), this protein is Single-pass membrane and coiled-coil domain-containing protein 4 (smco4).